A 90-amino-acid polypeptide reads, in one-letter code: Beta-microseminoprotein (90 aa).

5 cysteine pairs are disulfide-bonded: Cys-2/Cys-16, Cys-34/Cys-70, Cys-37/Cys-46, Cys-39/Cys-47, and Cys-61/Cys-84. Valine amide is present on Val-90.

It belongs to the beta-microseminoprotein family.

It is found in the secreted. This is Beta-microseminoprotein (MSMB) from Struthio camelus (Common ostrich).